The chain runs to 431 residues: MQPRFLLHGALLALGIQLCLSIGKITGHISSIEATAADIHDAPSTTTKYVQRTVYAGREKGKIGGPADSWPQRKLDDFLQNHGVKSLDVPPIETPSQFWRKPLQYVSKVTDKCKSFYEKEKNHASHNAQKLDVWIFNSWTNSELSRWLIKNKYEVPEPGTREQLLETVFQASMGDAISTNDELESWSNNLLLSMLDQKNITVPIGASHDDLIVLARRYYDIEERKSQDKVTNITDSQPAPYMKEIIHLWSDGRLIDFLRERNIPISVLSPRETLLKEAYANRFTPRVMIASNVLDGWSSEDLLDWIWKYNKRGSIFSHVAYNSRHELIHAAKLFYMDVASEWSSSDMASLNDSLYSHPSVSKQSTWTEEELKEELESFGELVPVPFSSTKAFERLLPHLYYYLRGPAFLNRIHYWQTFLGNSLKRAFVLSQ.

The signal sequence occupies residues Met1–Ser21.

It localises to the nucleus inner membrane. Inner nuclear envelope protein involved in nuclear fission, which is achieved via local disassembly of nuclear pores within the narrow bridge that links segregating daughter nuclei. Les1 restricts the process of local nuclear envelope breakdown to the bridge midzone to prevent the leakage of material from daughter nuclei during mitosis. This is Nuclear bridge Ish domain protein les1 from Schizosaccharomyces pombe (strain 972 / ATCC 24843) (Fission yeast).